The primary structure comprises 361 residues: UDP-N-acetylglucosamine--N-acetylmuramyl-(pentapeptide) pyrophosphoryl-undecaprenol N-acetylglucosamine transferase (361 aa).

UDP-N-acetyl-alpha-D-glucosamine contacts are provided by residues 12-14, asparagine 126, arginine 167, serine 192, isoleucine 247, and glutamine 292; that span reads TGG.

This sequence belongs to the glycosyltransferase 28 family. MurG subfamily.

It is found in the cell inner membrane. It carries out the reaction di-trans,octa-cis-undecaprenyl diphospho-N-acetyl-alpha-D-muramoyl-L-alanyl-D-glutamyl-meso-2,6-diaminopimeloyl-D-alanyl-D-alanine + UDP-N-acetyl-alpha-D-glucosamine = di-trans,octa-cis-undecaprenyl diphospho-[N-acetyl-alpha-D-glucosaminyl-(1-&gt;4)]-N-acetyl-alpha-D-muramoyl-L-alanyl-D-glutamyl-meso-2,6-diaminopimeloyl-D-alanyl-D-alanine + UDP + H(+). The protein operates within cell wall biogenesis; peptidoglycan biosynthesis. Cell wall formation. Catalyzes the transfer of a GlcNAc subunit on undecaprenyl-pyrophosphoryl-MurNAc-pentapeptide (lipid intermediate I) to form undecaprenyl-pyrophosphoryl-MurNAc-(pentapeptide)GlcNAc (lipid intermediate II). This chain is UDP-N-acetylglucosamine--N-acetylmuramyl-(pentapeptide) pyrophosphoryl-undecaprenol N-acetylglucosamine transferase, found in Syntrophus aciditrophicus (strain SB).